Reading from the N-terminus, the 193-residue chain is Non-specific lipid transfer protein GPI-anchored 1 (193 aa).

The first 22 residues, 1–22, serve as a signal peptide directing secretion; that stretch reads MKGLHLHLVLVTMTIVASIAAA. 4 cysteine pairs are disulfide-bonded: Cys35–Cys76, Cys45–Cys60, Cys61–Cys106, and Cys74–Cys116. Asn110 and Asn135 each carry an N-linked (GlcNAc...) asparagine glycan. The disordered stretch occupies residues 138–161; it reads TTPVAPAGKSPATPATSTDKGGSA. Asp165 carries GPI-anchor amidated aspartate lipidation. Residues 166-193 constitute a propeptide, removed in mature form; it reads GHAVVALAVALMAVSFVLTLPRHVTLGM.

The protein belongs to the plant LTP family. In terms of processing, O-glycosylated on hydroxyprolines; noncontiguous hydroxylproline residues are glycosylated with arabinogalactan. Up-regulated in the epidermis of stems and leaves. Expressed in the epidermis, stem cortex, vascular bundles and mesophyll cells in root tips, cotyledons, seedlings, leaves, caulines, flowers, siliques, pollen, and early-developing seeds.

It localises to the cell membrane. Its subcellular location is the secreted. The protein resides in the cell wall. The protein localises to the endoplasmic reticulum. It is found in the golgi apparatus. Lipid transfer protein that, together with LTPG2, binds to lipids and functions as a component of the cuticular lipid export machinery that performs extensive export of intracellular lipids (e.g. C29 alkane) from epidermal cells to the surface to build the cuticular wax layer and silique walls. Involved in the establishment of resistance to the necrotrophic fungal pathogen Alternaria brassicicola. Contributes to pre-invasive defense against some non-host powdery mildew pathogens by preventing the penetration of the epidermal cell wall by the fungal agents (e.g. Blumeria graminis f. sp. hordei (Bgh)). Maybe involved in seed and ovule maturation and development, probably by regulating the fatty acids homeostasis during suberin and sporopollenin biosynthesis or deposition. In Arabidopsis thaliana (Mouse-ear cress), this protein is Non-specific lipid transfer protein GPI-anchored 1.